A 525-amino-acid chain; its full sequence is Probable CoA ligase CCL9 (525 aa).

Residues 171–179 (TSGTTSRPK), 311–316 (EAYAMT), aspartate 395, 407–410 (LVGR), and lysine 501 each bind ATP. An SBD1 region spans residues 242 to 311 (SASTFWSDMI…EESFGAPVLE (70 aa)). The tract at residues 312 to 375 (AYAMTEAAHL…IRGPNVTKGY (64 aa)) is SBD2.

It belongs to the ATP-dependent AMP-binding enzyme family.

The protein localises to the cytoplasm. The protein resides in the cytosol. The chain is Probable CoA ligase CCL9 from Humulus lupulus (European hop).